The chain runs to 285 residues: Seed agglutinin 2 (285 aa).

The N-terminal stretch at 1–31 (MASYKFKTQNSFLLLLSISFFFLLLLNKVNS) is a signal peptide. Residue Asn-147 is glycosylated (N-linked (GlcNAc...) asparagine). Mn(2+) is bound by residues Glu-156 and Asp-158. Residues Asp-158, Asn-162, and Asp-166 each coordinate Ca(2+). Mn(2+)-binding residues include Asp-166 and His-171.

Belongs to the leguminous lectin family. In terms of assembly, homotetramer. In terms of processing, mostly found in non-glycosylated form. Expressed in seed.

Its function is as follows. Seed lectin. The protein is Seed agglutinin 2 of Robinia pseudoacacia (Black locust).